We begin with the raw amino-acid sequence, 223 residues long: Pre-mRNA-splicing factor SPF27 (223 aa).

Residues 139-223 (NENLLHMIDC…GENKENIEDY (85 aa)) are a coiled coil.

It belongs to the SPF27 family. Component of the pre-catalytic and catalytic spliceosome complexes. Component of the postcatalytic spliceosome P complex.

The protein localises to the nucleus. Its function is as follows. Required for pre-mRNA splicing as component of the activated spliceosome. May have a scaffolding role in the spliceosome assembly as it contacts all other components of the core complex. The sequence is that of Pre-mRNA-splicing factor SPF27 (bcas2) from Xenopus tropicalis (Western clawed frog).